The chain runs to 250 residues: Small ribosomal subunit protein uS2 (250 aa).

It belongs to the universal ribosomal protein uS2 family.

This Albidiferax ferrireducens (strain ATCC BAA-621 / DSM 15236 / T118) (Rhodoferax ferrireducens) protein is Small ribosomal subunit protein uS2.